Consider the following 302-residue polypeptide: MMKTDTDLINSLSPSAMDQIMLYLAFSAMRTSGHRHGAFLDAAATAAKCAIYMTYIEQGQNLRMTGHLHHIEPKRVKVIVQEVEEALTKGKLLKMLGSQEPRYLIQFPYVWLEQYPWTPSRSRLPGNNLTTEEKRYIEGKLPSNMPDARLINSFQFMELIEFLHRRSQEDFPPERRMPLSEALAEHIKRRLIYSGTVTKIDSPWGMPFYALTRSSYSPEGQEERTYIMVEDTARYFRLMKDWAENNNTNKVMRILEEFDISPDRFEQAKEDLDEIIRHWADRYHESGGKQMVVQMVFGLKDD.

Residue Ser153 is part of the active site.

Belongs to the peptidase S48 family. As to quaternary structure, homodimer; disulfide-linked.

Functionally, might be involved in temporal and/or spatial regulation of nitrogen fixation. Dimerization is required for DNA-binding. Has both a protease and a DNA-binding activity. In Trichodesmium erythraeum (strain IMS101), this protein is DNA-binding transcriptional activator HetR.